Reading from the N-terminus, the 148-residue chain is Large ribosomal subunit protein bL9 (148 aa).

This sequence belongs to the bacterial ribosomal protein bL9 family.

In terms of biological role, binds to the 23S rRNA. The polypeptide is Large ribosomal subunit protein bL9 (Bifidobacterium animalis subsp. lactis (strain AD011)).